A 399-amino-acid chain; its full sequence is CCA-adding enzyme (399 aa).

Positions 32 and 35 each coordinate ATP. Gly-32 and Arg-35 together coordinate CTP. Residues Asp-45 and Asp-47 each contribute to the Mg(2+) site. Residues Arg-116, Asp-159, Arg-162, Arg-165, and Arg-168 each coordinate ATP. Residues Arg-116, Asp-159, Arg-162, Arg-165, and Arg-168 each coordinate CTP.

Belongs to the tRNA nucleotidyltransferase/poly(A) polymerase family. Bacterial CCA-adding enzyme type 3 subfamily. Homodimer. Mg(2+) is required as a cofactor.

It catalyses the reaction a tRNA precursor + 2 CTP + ATP = a tRNA with a 3' CCA end + 3 diphosphate. The catalysed reaction is a tRNA with a 3' CCA end + 2 CTP + ATP = a tRNA with a 3' CCACCA end + 3 diphosphate. In terms of biological role, catalyzes the addition and repair of the essential 3'-terminal CCA sequence in tRNAs without using a nucleic acid template. Adds these three nucleotides in the order of C, C, and A to the tRNA nucleotide-73, using CTP and ATP as substrates and producing inorganic pyrophosphate. tRNA 3'-terminal CCA addition is required both for tRNA processing and repair. Also involved in tRNA surveillance by mediating tandem CCA addition to generate a CCACCA at the 3' terminus of unstable tRNAs. While stable tRNAs receive only 3'-terminal CCA, unstable tRNAs are marked with CCACCA and rapidly degraded. This Streptococcus pneumoniae serotype 4 (strain ATCC BAA-334 / TIGR4) protein is CCA-adding enzyme.